The primary structure comprises 283 residues: Bifunctional protein FolD 2 (283 aa).

Residues glycine 165–glycine 167, threonine 192, and valine 233 contribute to the NADP(+) site.

Belongs to the tetrahydrofolate dehydrogenase/cyclohydrolase family. Homodimer.

The catalysed reaction is (6R)-5,10-methylene-5,6,7,8-tetrahydrofolate + NADP(+) = (6R)-5,10-methenyltetrahydrofolate + NADPH. It catalyses the reaction (6R)-5,10-methenyltetrahydrofolate + H2O = (6R)-10-formyltetrahydrofolate + H(+). Its pathway is one-carbon metabolism; tetrahydrofolate interconversion. In terms of biological role, catalyzes the oxidation of 5,10-methylenetetrahydrofolate to 5,10-methenyltetrahydrofolate and then the hydrolysis of 5,10-methenyltetrahydrofolate to 10-formyltetrahydrofolate. The chain is Bifunctional protein FolD 2 from Nocardioides sp. (strain ATCC BAA-499 / JS614).